A 404-amino-acid chain; its full sequence is Histidine--tRNA ligase (404 aa).

This sequence belongs to the class-II aminoacyl-tRNA synthetase family.

The protein localises to the cytoplasm. The catalysed reaction is tRNA(His) + L-histidine + ATP = L-histidyl-tRNA(His) + AMP + diphosphate + H(+). This chain is Histidine--tRNA ligase, found in Nanoarchaeum equitans (strain Kin4-M).